We begin with the raw amino-acid sequence, 407 residues long: Multifunctional CCA protein (407 aa).

Positions 8 and 11 each coordinate ATP. CTP is bound by residues glycine 8 and arginine 11. Mg(2+) is bound by residues aspartate 21 and aspartate 23. ATP is bound by residues arginine 91, arginine 137, and arginine 140. CTP contacts are provided by arginine 91, arginine 137, and arginine 140. One can recognise an HD domain in the interval 228-329; sequence TGIHTLLVAE…VKIFNKLDVW (102 aa).

It belongs to the tRNA nucleotidyltransferase/poly(A) polymerase family. Bacterial CCA-adding enzyme type 1 subfamily. As to quaternary structure, monomer. Can also form homodimers and oligomers. Requires Mg(2+) as cofactor. The cofactor is Ni(2+).

It catalyses the reaction a tRNA precursor + 2 CTP + ATP = a tRNA with a 3' CCA end + 3 diphosphate. It carries out the reaction a tRNA with a 3' CCA end + 2 CTP + ATP = a tRNA with a 3' CCACCA end + 3 diphosphate. In terms of biological role, catalyzes the addition and repair of the essential 3'-terminal CCA sequence in tRNAs without using a nucleic acid template. Adds these three nucleotides in the order of C, C, and A to the tRNA nucleotide-73, using CTP and ATP as substrates and producing inorganic pyrophosphate. tRNA 3'-terminal CCA addition is required both for tRNA processing and repair. Also involved in tRNA surveillance by mediating tandem CCA addition to generate a CCACCA at the 3' terminus of unstable tRNAs. While stable tRNAs receive only 3'-terminal CCA, unstable tRNAs are marked with CCACCA and rapidly degraded. The sequence is that of Multifunctional CCA protein from Vibrio vulnificus (strain YJ016).